The following is a 441-amino-acid chain: pH-response regulator protein palC (441 aa).

The BRO1 domain occupies 3 to 352 (ISYTGQLPTT…GAAYAAILQL (350 aa)). Disordered stretches follow at residues 278-304 (RKDD…TSSG) and 414-441 (KWTP…GSYY).

Belongs to the palC family.

Required for the proteolytic cleavage of the transcription factor RIM101 in response to alkaline ambient pH. In Yarrowia lipolytica (strain CLIB 122 / E 150) (Yeast), this protein is pH-response regulator protein palC.